Reading from the N-terminus, the 473-residue chain is Serine palmitoyltransferase 1 (473 aa).

Residues 1-15 lie on the Lumenal side of the membrane; the sequence is MATVAEQWVLVEMVQ. The interval 1-66 is interaction with SPTLC2; sequence MATVAEQWVL…KEELIEEWQP (66 aa). Residues 16–36 traverse the membrane as a helical segment; the sequence is ALYEAPAYHLILEGILILWII. Topologically, residues 37 to 473 are cytoplasmic; that stretch reads RLVFSKTYKL…IREAAQAVLL (437 aa). Position 164 is a phosphotyrosine; by ABL (Tyr164).

Belongs to the class-II pyridoxal-phosphate-dependent aminotransferase family. Component of the serine palmitoyltransferase (SPT) complex, which is also composed of SPTLC2 or SPTLC3 and SPTSSA or SPTSSB. The heterodimer with SPTLC2 or SPTLC3 forms the catalytic core of the enzyme, while SPTSSA or SPTSSB subunits determine substrate specificity. SPT also interacts with ORMDL proteins, especially ORMDL3, which negatively regulate SPT activity in the presence of ceramides. Forms dimers of heterodimers with SPTLC2. Interacts with RTN4 (isoform B). The cofactor is pyridoxal 5'-phosphate. Phosphorylation at Tyr-164 inhibits activity and promotes cell survival. In terms of tissue distribution, expressed in astrocytes.

It localises to the endoplasmic reticulum membrane. The enzyme catalyses L-serine + hexadecanoyl-CoA + H(+) = 3-oxosphinganine + CO2 + CoA. The catalysed reaction is octadecanoyl-CoA + L-serine + H(+) = 3-oxoeicosasphinganine + CO2 + CoA. It carries out the reaction tetradecanoyl-CoA + L-serine + H(+) = 3-oxohexadecasphinganine + CO2 + CoA. It catalyses the reaction dodecanoyl-CoA + L-serine + H(+) = 3-oxotetradecasphinganine + CO2 + CoA. It participates in lipid metabolism; sphingolipid metabolism. SPT complex catalytic activity is negatively regulated by ORMDL proteins, including ORMDL3, in the presence of ceramides. This mechanism allows to maintain ceramide levels at sufficient concentrations for the production of complex sphingolipids, but which prevents the accumulation of ceramides to levels that trigger apoptosis. In terms of biological role, component of the serine palmitoyltransferase multisubunit enzyme (SPT) that catalyzes the initial and rate-limiting step in sphingolipid biosynthesis by condensing L-serine and activated acyl-CoA (most commonly palmitoyl-CoA) to form long-chain bases. The SPT complex is also composed of SPTLC2 or SPTLC3 and SPTSSA or SPTSSB. Within this complex, the heterodimer with SPTLC2 or SPTLC3 forms the catalytic core. The composition of the serine palmitoyltransferase (SPT) complex determines the substrate preference. The SPTLC1-SPTLC2-SPTSSA complex shows a strong preference for C16-CoA substrate, while the SPTLC1-SPTLC3-SPTSSA isozyme uses both C14-CoA and C16-CoA as substrates, with a slight preference for C14-CoA. The SPTLC1-SPTLC2-SPTSSB complex shows a strong preference for C18-CoA substrate, while the SPTLC1-SPTLC3-SPTSSB isozyme displays an ability to use a broader range of acyl-CoAs, without apparent preference. Required for adipocyte cell viability and metabolic homeostasis. In Rattus norvegicus (Rat), this protein is Serine palmitoyltransferase 1.